We begin with the raw amino-acid sequence, 220 residues long: Large ribosomal subunit protein uL3 (220 aa).

Positions 113–143 (GTTKGHGYQGNIHKDGQRRGPMAHGSRYHRR) are disordered.

This sequence belongs to the universal ribosomal protein uL3 family. In terms of assembly, part of the 50S ribosomal subunit. Forms a cluster with proteins L14 and L19.

One of the primary rRNA binding proteins, it binds directly near the 3'-end of the 23S rRNA, where it nucleates assembly of the 50S subunit. This chain is Large ribosomal subunit protein uL3, found in Limosilactobacillus fermentum (strain NBRC 3956 / LMG 18251) (Lactobacillus fermentum).